The sequence spans 461 residues: Bifunctional protein HldE (461 aa).

The tract at residues 1–312 (MLEFLSQQKP…IRSFKSMSFE (312 aa)) is ribokinase. An ATP-binding site is contributed by 191–194 (NKKE). Residue aspartate 259 is part of the active site. The tract at residues 334–461 (FTNGCFDIVH…KIIEKIKDKK (128 aa)) is cytidylyltransferase.

In the N-terminal section; belongs to the carbohydrate kinase PfkB family. This sequence in the C-terminal section; belongs to the cytidylyltransferase family. In terms of assembly, homodimer.

The catalysed reaction is D-glycero-beta-D-manno-heptose 7-phosphate + ATP = D-glycero-beta-D-manno-heptose 1,7-bisphosphate + ADP + H(+). It carries out the reaction D-glycero-beta-D-manno-heptose 1-phosphate + ATP + H(+) = ADP-D-glycero-beta-D-manno-heptose + diphosphate. Its pathway is nucleotide-sugar biosynthesis; ADP-L-glycero-beta-D-manno-heptose biosynthesis; ADP-L-glycero-beta-D-manno-heptose from D-glycero-beta-D-manno-heptose 7-phosphate: step 1/4. It participates in nucleotide-sugar biosynthesis; ADP-L-glycero-beta-D-manno-heptose biosynthesis; ADP-L-glycero-beta-D-manno-heptose from D-glycero-beta-D-manno-heptose 7-phosphate: step 3/4. Its function is as follows. Catalyzes the phosphorylation of D-glycero-D-manno-heptose 7-phosphate at the C-1 position to selectively form D-glycero-beta-D-manno-heptose-1,7-bisphosphate. Catalyzes the ADP transfer from ATP to D-glycero-beta-D-manno-heptose 1-phosphate, yielding ADP-D-glycero-beta-D-manno-heptose. The polypeptide is Bifunctional protein HldE (Campylobacter jejuni (strain RM1221)).